A 207-amino-acid polypeptide reads, in one-letter code: ConoCAP (207 aa).

An N-terminal signal peptide occupies residues 1 to 21 (MVSLGHVLFVILLPVLLPVAA). A propeptide spanning residues 22 to 48 (DDPDDQMLSQISLPSSSRSEYDDNDVS) is cleaved from the precursor. Cys53 and Cys59 form a disulfide bridge. At Gly60 the chain carries Glycine amide. A propeptide spanning residues 63-82 (HRDRSRRQERYGKRLIPVLA) is cleaved from the precursor. A disulfide bond links Cys87 and Cys92. Asn94 bears the Asparagine amide mark. Positions 98–160 (SLSGAGPALS…RDPAASGDLS (63 aa)) are excised as a propeptide. The segment at 131–155 (ARHEQQQQLLQQREQRGLESRDPAA) is disordered. The segment covering 143 to 152 (REQRGLESRD) has biased composition (basic and acidic residues). An intrachain disulfide couples Cys165 to Cys171. Gly173 carries the glycine amide modification. Positions 177-207 (TLYSPWLERMNEVADDRSARNALCTRLGWRE) are excised as a propeptide.

Expressed by the venom duct.

Its subcellular location is the secreted. Functionally, in contrast to other members of the CCAP family which are cardio-accelerators, conoCAP-a decreases the heart frequency in Drosophila larvae (26%), rats and zebrafish embryos. It also reduces the blood pressure in rats. It decreases systolic calcium in ventricular cardiac myocytes, indicating that it may act via impairment of intracellular calcium trafficking. In terms of biological role, synthetic conoCAP-b decreases the heart frequency of 23% in Drosophila larvae. Synthetic conoCAP-c decreases the heart frequency of 12% in Drosophila larvae. In Conus villepinii (Villepin's cone), this protein is ConoCAP (conoCAP).